The chain runs to 148 residues: HTH-type transcriptional regulator Rv2324 (148 aa).

Residues 4–65 (LDDTDERILA…VVDRNALGWN (62 aa)) enclose the HTH asnC-type domain. Residues 23–42 (FAEIGHKVSLSAPAVKRRVD) constitute a DNA-binding region (H-T-H motif).

In terms of assembly, homodimer. Forms oligomers.

The DNA-binding activity of Rv2324 is modulated by interaction of Rv2324 with amino acids. Aspartate is the only effector amino acid that completely abolishes DNA binding. The majority of amino acids induce a dimer-tetramer or dimer-hexamer oligomeric transition. In response to amino-acid binding, adopts an open quaternary association, which is a part of the functional requirement to bind to non-symmetrically distributed target DNA binding sites. Functionally, transcriptional regulator involved in growth, DNA replication and damage control. Plays a crucial role in regulating survival and growth of M.tuberculosis. Could function as a global regulator in both the latent/persistent and active phases of growth. Binds to its own promoter region and to promoters of multiple metabolic genes, such as serB2, lat, ald and roc operon. In vitro, interacts with intrinsically curved and non-curved DNA molecules, and with both supercoiled and linear DNA, with higher affinity for supercoiled DNA. Binds to DNA recombination, replication and repair intermediates. The protein is HTH-type transcriptional regulator Rv2324 of Mycobacterium tuberculosis (strain ATCC 25618 / H37Rv).